Reading from the N-terminus, the 262-residue chain is Cutinase 1 (262 aa).

Tyr61 is a binding site for poly(ethylene terephthalate). The active-site Nucleophile is the Ser131. Met132 and Trp156 together coordinate poly(ethylene terephthalate). Catalysis depends on charge relay system residues Asp177 and His209. An intrachain disulfide couples Cys242 to Cys260.

The protein belongs to the AB hydrolase superfamily.

It is found in the secreted. Its subcellular location is the periplasm. It catalyses the reaction (ethylene terephthalate)(n) + H2O = (ethylene terephthalate)(n-1) + 4-[(2-hydroxyethoxy)carbonyl]benzoate + H(+). The enzyme catalyses a butanoate ester + H2O = an aliphatic alcohol + butanoate + H(+). It carries out the reaction an acetyl ester + H2O = an aliphatic alcohol + acetate + H(+). The catalysed reaction is cutin + H2O = cutin monomers.. Functionally, catalyzes the hydrolysis of cutin, a polyester that forms the structure of plant cuticle. Shows esterase activity towards p-nitrophenol-linked aliphatic esters (pNP-aliphatic esters). Capable of degrading the plastic poly(ethylene terephthalate) (PET), the most abundant polyester plastic in the world. Capable of degrading the bioplastic poly(lactic acid) (PLLA). The protein is Cutinase 1 of Thermobifida cellulosilytica.